Here is a 354-residue protein sequence, read N- to C-terminus: DNA-binding protein EMBP-1 (354 aa).

Disordered stretches follow at residues 1–24 (MASSSSATSGDDRPPAAGGGTPAQ), 106–193 (SAAG…RSAS), and 230–273 (EVNA…RKQQ). 2 stretches are compositionally biased toward low complexity: residues 127–140 (SSSGSGDAGSQGSS) and 232–245 (NAAASSQSNASLSQ). Over residues 246 to 265 (MDERELKRERRKQSNRESAR) the composition is skewed to basic and acidic residues. The region spanning 250-313 (ELKRERRKQS…KTMETENKKL (64 aa)) is the bZIP domain. Residues 252–271 (KRERRKQSNRESARRSRLRK) form a basic motif region. The segment at 278 to 299 (LAQKVSELTAANGTLRSELDQL) is leucine-zipper.

It belongs to the bZIP family. As to quaternary structure, heterodimer.

It is found in the nucleus. Functionally, interacts specifically with the 8-bp sequence 5'-CACGTGGC-3'in the abscisic acid response element (ABARE). Also binds to the hexamer motif 5'-ACGTCA-3' of histone gene promoters. The chain is DNA-binding protein EMBP-1 from Triticum aestivum (Wheat).